Reading from the N-terminus, the 236-residue chain is Ribose-5-phosphate isomerase A (236 aa).

Residues 31–34, 88–91, and 101–104 each bind substrate; these read TGST, DGAD, and KGGG. Glu-110 serves as the catalytic Proton acceptor. Residue Lys-128 participates in substrate binding.

It belongs to the ribose 5-phosphate isomerase family. As to quaternary structure, homodimer.

It catalyses the reaction aldehydo-D-ribose 5-phosphate = D-ribulose 5-phosphate. It participates in carbohydrate degradation; pentose phosphate pathway; D-ribose 5-phosphate from D-ribulose 5-phosphate (non-oxidative stage): step 1/1. Functionally, catalyzes the reversible conversion of ribose-5-phosphate to ribulose 5-phosphate. The polypeptide is Ribose-5-phosphate isomerase A (Thermosynechococcus vestitus (strain NIES-2133 / IAM M-273 / BP-1)).